Reading from the N-terminus, the 105-residue chain is NADH-quinone oxidoreductase subunit K (105 aa).

3 helical membrane-spanning segments follow: residues 8-28, 33-53, and 65-85; these read VTNGLIFSTLLFVISVAGIII, ILILLMSIELMLLAVNTNFLI, and VFVFFIMAVAAAETAIGLAIV.

Belongs to the complex I subunit 4L family. As to quaternary structure, NDH-1 is composed of 14 different subunits. Subunits NuoA, H, J, K, L, M, N constitute the membrane sector of the complex.

The protein resides in the cell inner membrane. It catalyses the reaction a quinone + NADH + 5 H(+)(in) = a quinol + NAD(+) + 4 H(+)(out). Functionally, NDH-1 shuttles electrons from NADH, via FMN and iron-sulfur (Fe-S) centers, to quinones in the respiratory chain. The immediate electron acceptor for the enzyme in this species is believed to be ubiquinone. Couples the redox reaction to proton translocation (for every two electrons transferred, four hydrogen ions are translocated across the cytoplasmic membrane), and thus conserves the redox energy in a proton gradient. The chain is NADH-quinone oxidoreductase subunit K from Francisella philomiragia subsp. philomiragia (strain ATCC 25017 / CCUG 19701 / FSC 153 / O#319-036).